A 159-amino-acid polypeptide reads, in one-letter code: Protein US8.5 (159 aa).

A disordered region spans residues 27–107 (SSQPLDPEGP…APSPHPRPPG (81 aa)). The segment covering 80-91 (SDERGPPRHDRP) has biased composition (basic and acidic residues).

This sequence belongs to the HHV-1 US8.5 protein family. In terms of processing, phosphorylated.

The protein localises to the host nucleus. The protein resides in the host nucleolus. The polypeptide is Protein US8.5 (Human herpesvirus 1 (strain 17) (HHV-1)).